The following is a 256-amino-acid chain: Thiazole synthase (256 aa).

Lys96 acts as the Schiff-base intermediate with DXP in catalysis. 1-deoxy-D-xylulose 5-phosphate-binding positions include Gly157, Ala183–Gly184, and Asn205–Thr206.

The protein belongs to the ThiG family. Homotetramer. Forms heterodimers with either ThiH or ThiS.

The protein localises to the cytoplasm. It catalyses the reaction [ThiS sulfur-carrier protein]-C-terminal-Gly-aminoethanethioate + 2-iminoacetate + 1-deoxy-D-xylulose 5-phosphate = [ThiS sulfur-carrier protein]-C-terminal Gly-Gly + 2-[(2R,5Z)-2-carboxy-4-methylthiazol-5(2H)-ylidene]ethyl phosphate + 2 H2O + H(+). It participates in cofactor biosynthesis; thiamine diphosphate biosynthesis. Its function is as follows. Catalyzes the rearrangement of 1-deoxy-D-xylulose 5-phosphate (DXP) to produce the thiazole phosphate moiety of thiamine. Sulfur is provided by the thiocarboxylate moiety of the carrier protein ThiS. In vitro, sulfur can be provided by H(2)S. This is Thiazole synthase from Bacillus cereus (strain ATCC 10987 / NRS 248).